A 333-amino-acid polypeptide reads, in one-letter code: MRRVTLTQFLIEQQRAGRVSADLRLLIEVVARAVKAISVNVSKGALAGVLGEAGTDNVQGEAQKKLDVIANEILLQANEWGGHLAAMASEEVETVHQIPFDYPKGGYLLLFDPLDGSSNIDVNISVGTIFSVLRFPEGEAEPTEQSFMQPGREQVAAGYAVYGPSTQLVLTVGHGVHAFTLDREMGSFIYTHPFMTIPDDTHEFAINASNARFWEEPVQRYVGELQAGKTGPRGKDFNMRWVASMVADVHRILTRGGIFMYPLDEKCRAQGGKLRLMYEANPMAMLVEQAGGAATTGRERILDLMPTKLHQRVPVILGSRNEVERVTAYHRES.

Mg(2+) is bound by residues Glu-90, Asp-112, Leu-114, and Asp-115. Residues 115 to 118 (DGSS), Asn-207, and Lys-273 each bind substrate. Glu-279 lines the Mg(2+) pocket.

It belongs to the FBPase class 1 family. As to quaternary structure, homotetramer. Requires Mg(2+) as cofactor.

The protein resides in the cytoplasm. The catalysed reaction is beta-D-fructose 1,6-bisphosphate + H2O = beta-D-fructose 6-phosphate + phosphate. The protein operates within carbohydrate biosynthesis; gluconeogenesis. In Azoarcus sp. (strain BH72), this protein is Fructose-1,6-bisphosphatase class 1.